The following is a 428-amino-acid chain: Adenylosuccinate synthetase (428 aa).

GTP-binding positions include 12 to 18 (GDEGKGK) and 40 to 42 (GHS). Catalysis depends on Asp-13, which acts as the Proton acceptor. Mg(2+) contacts are provided by Asp-13 and Gly-40. Residues 13–16 (DEGK), 38–41 (NAGH), Thr-128, Arg-142, Gln-223, Thr-238, and Arg-302 each bind IMP. His-41 serves as the catalytic Proton donor. 298–304 (VTTGRPR) provides a ligand contact to substrate. Residues Arg-304, 330 to 332 (KLD), and 412 to 414 (GTG) each bind GTP.

This sequence belongs to the adenylosuccinate synthetase family. As to quaternary structure, homodimer. It depends on Mg(2+) as a cofactor.

The protein resides in the cytoplasm. It catalyses the reaction IMP + L-aspartate + GTP = N(6)-(1,2-dicarboxyethyl)-AMP + GDP + phosphate + 2 H(+). The protein operates within purine metabolism; AMP biosynthesis via de novo pathway; AMP from IMP: step 1/2. In terms of biological role, plays an important role in the de novo pathway of purine nucleotide biosynthesis. Catalyzes the first committed step in the biosynthesis of AMP from IMP. The chain is Adenylosuccinate synthetase from Bifidobacterium longum (strain NCC 2705).